A 377-amino-acid polypeptide reads, in one-letter code: Flagellar P-ring protein (377 aa).

The signal sequence occupies residues 1–30; the sequence is MLARFLSSLLKASVTALAVVVAFGFAANFA.

It belongs to the FlgI family. The basal body constitutes a major portion of the flagellar organelle and consists of four rings (L,P,S, and M) mounted on a central rod.

The protein resides in the periplasm. It is found in the bacterial flagellum basal body. Its function is as follows. Assembles around the rod to form the L-ring and probably protects the motor/basal body from shearing forces during rotation. The polypeptide is Flagellar P-ring protein (Cupriavidus pinatubonensis (strain JMP 134 / LMG 1197) (Cupriavidus necator (strain JMP 134))).